Reading from the N-terminus, the 737-residue chain is Probable beta-glucosidase L (737 aa).

The N-terminal stretch at 1–19 (MRSLIRSGALNAFLAASLA) is a signal peptide. N225 carries N-linked (GlcNAc...) asparagine glycosylation. The active site involves D253. 3 N-linked (GlcNAc...) asparagine glycosylation sites follow: N340, N365, and N608.

Belongs to the glycosyl hydrolase 3 family.

The protein resides in the secreted. It carries out the reaction Hydrolysis of terminal, non-reducing beta-D-glucosyl residues with release of beta-D-glucose.. Its pathway is glycan metabolism; cellulose degradation. In terms of biological role, beta-glucosidases are one of a number of cellulolytic enzymes involved in the degradation of cellulosic biomass. Catalyzes the last step releasing glucose from the inhibitory cellobiose. The polypeptide is Probable beta-glucosidase L (bglL) (Emericella nidulans (strain FGSC A4 / ATCC 38163 / CBS 112.46 / NRRL 194 / M139) (Aspergillus nidulans)).